Reading from the N-terminus, the 371-residue chain is Bifunctional chorismate mutase/prephenate dehydratase (371 aa).

One can recognise a Chorismate mutase domain in the interval 1-92 (MTLKNALLAF…DSVLTQKKWI (92 aa)). Substrate-binding residues include Arg11, Arg28, Lys39, Asp48, Glu52, Ser84, and Gln88. A Prephenate dehydratase domain is found at 104–284 (KISFLGSFGS…NITQFIILAQ (181 aa)). Residues 285–371 (KKTYITNKKT…IKCIKILGCF (87 aa)) are regulatory.

The protein resides in the cytoplasm. The enzyme catalyses chorismate = prephenate. It carries out the reaction prephenate + H(+) = 3-phenylpyruvate + CO2 + H2O. Its pathway is amino-acid biosynthesis; L-phenylalanine biosynthesis; phenylpyruvate from prephenate: step 1/1. The protein operates within metabolic intermediate biosynthesis; prephenate biosynthesis; prephenate from chorismate: step 1/1. Its function is as follows. Catalyzes the Claisen rearrangement of chorismate to prephenate and the decarboxylation/dehydration of prephenate to phenylpyruvate. The protein is Bifunctional chorismate mutase/prephenate dehydratase (pheA) of Buchnera aphidicola subsp. Baizongia pistaciae (strain Bp).